A 442-amino-acid chain; its full sequence is D-inositol 3-phosphate glycosyltransferase (442 aa).

Position 26 (H26) interacts with 1D-myo-inositol 3-phosphate. UDP-N-acetyl-alpha-D-glucosamine-binding positions include 32–33 (QP) and G40. 1D-myo-inositol 3-phosphate contacts are provided by residues 37–42 (DAGGMN), K95, Y128, T152, and R172. R246, K251, and Q304 together coordinate UDP-N-acetyl-alpha-D-glucosamine. The Mg(2+) site is built by Y313, R314, and A316. Positions 326 and 334 each coordinate UDP-N-acetyl-alpha-D-glucosamine. Residue T340 coordinates Mg(2+).

This sequence belongs to the glycosyltransferase group 1 family. MshA subfamily. As to quaternary structure, homodimer.

It carries out the reaction 1D-myo-inositol 3-phosphate + UDP-N-acetyl-alpha-D-glucosamine = 1D-myo-inositol 2-acetamido-2-deoxy-alpha-D-glucopyranoside 3-phosphate + UDP + H(+). In terms of biological role, catalyzes the transfer of a N-acetyl-glucosamine moiety to 1D-myo-inositol 3-phosphate to produce 1D-myo-inositol 2-acetamido-2-deoxy-glucopyranoside 3-phosphate in the mycothiol biosynthesis pathway. The chain is D-inositol 3-phosphate glycosyltransferase from Mycolicibacterium gilvum (strain PYR-GCK) (Mycobacterium gilvum (strain PYR-GCK)).